An 831-amino-acid polypeptide reads, in one-letter code: uncharacterized protein (831 aa).

A disordered region spans residues 285–311; that stretch reads ALNLKRQQLKEEQKEQQSTGDRSDVST. Residue 470–477 participates in ATP binding; that stretch reads GDTGNGKS.

This is an uncharacterized protein from Bacillus subtilis (strain 168).